The sequence spans 150 residues: Large ribosomal subunit protein uL13 (150 aa).

A disordered region spans residues 129–150 (AEHPHAAQQPKPLQLDPAATAQ).

The protein belongs to the universal ribosomal protein uL13 family. Part of the 50S ribosomal subunit.

Functionally, this protein is one of the early assembly proteins of the 50S ribosomal subunit, although it is not seen to bind rRNA by itself. It is important during the early stages of 50S assembly. The sequence is that of Large ribosomal subunit protein uL13 from Synechococcus sp. (strain WH7803).